A 296-amino-acid chain; its full sequence is MVCKVLIALCIFTAGLRVQGSPTVPLPVSLMTKSSAPVATWTTSAPHTARATTPVASATHNASVLRTTAASLTSQLPTDHREEAVTSPPLKRDVNSTDSSPAGFPSTSSDGHLAPTPEEHSLGSPEATVPATGSQSPMLLSSQAPTSATTSPATSLSESLSASVTSSHNSTVANIQPTEAPMAPASPTEEHSSSHTPTSHVTAEPVPKEKSPQDTEPGKVICESETTTPFLIMQEVENALSSGSIAAITVTVIAVVLLVFGGAAYLKIRHSSYGRLLDDHDYGSWGNYNNPLYDDS.

The signal sequence occupies residues 1–20 (MVCKVLIALCIFTAGLRVQG). The Extracellular segment spans residues 21-244 (SPTVPLPVSL…EVENALSSGS (224 aa)). Residues N61 and N95 are each glycosylated (N-linked (GlcNAc...) asparagine). Positions 72-220 (LTSQLPTDHR…SPQDTEPGKV (149 aa)) are disordered. The segment covering 78–95 (TDHREEAVTSPPLKRDVN) has biased composition (basic and acidic residues). A compositionally biased stretch (polar residues) spans 96–110 (STDSSPAGFPSTSSD). Positions 139–167 (LLSSQAPTSATTSPATSLSESLSASVTSS) are enriched in low complexity. Residues 168–177 (HNSTVANIQP) are compositionally biased toward polar residues. N-linked (GlcNAc...) asparagine glycosylation is present at N169. The span at 206 to 217 (VPKEKSPQDTEP) shows a compositional bias: basic and acidic residues. Residues 245–265 (IAAITVTVIAVVLLVFGGAAY) traverse the membrane as a helical segment. The Cytoplasmic segment spans residues 266–296 (LKIRHSSYGRLLDDHDYGSWGNYNNPLYDDS). A Phosphoserine modification is found at S284.

This sequence belongs to the PARM family. In terms of processing, highly N-glycosylated and O-glycosylated.

The protein localises to the cell membrane. The protein resides in the golgi apparatus membrane. It is found in the endosome membrane. In terms of biological role, may regulate TLP1 expression and telomerase activity, thus enabling certain prostatic cells to resist apoptosis. The protein is Prostate androgen-regulated mucin-like protein 1 homolog (Parm1) of Mus musculus (Mouse).